We begin with the raw amino-acid sequence, 181 residues long: Photosystem I assembly protein Ycf4 (181 aa).

Transmembrane regions (helical) follow at residues 19 to 41 (YAWC…GSYF) and 61 to 83 (IVMM…SIFT).

It belongs to the Ycf4 family.

Its subcellular location is the plastid. It localises to the chloroplast thylakoid membrane. Seems to be required for the assembly of the photosystem I complex. The polypeptide is Photosystem I assembly protein Ycf4 (Guillardia theta (Cryptophyte)).